The primary structure comprises 470 residues: Chromosomal replication initiator protein DnaA (470 aa).

The segment at 1–89 (MIESNHVVLW…YNVMVDKTSI (89 aa)) is domain I, interacts with DnaA modulators. The domain II stretch occupies residues 89-130 (IPNQTVNLEASNRSTAVTPKSIVGGNKAPSFLKAPAVQDLDP). Residues 131–348 (HLNPNYNFEN…GIVIAIMARS (218 aa)) are domain III, AAA+ region. 4 residues coordinate ATP: G176, G178, K179, and T180. The segment at 349-470 (TIFNKEIDLD…EIESLLKKKA (122 aa)) is domain IV, binds dsDNA.

Belongs to the DnaA family. Oligomerizes as a right-handed, spiral filament on DNA at oriC.

It is found in the cytoplasm. Plays an essential role in the initiation and regulation of chromosomal replication. ATP-DnaA binds to the origin of replication (oriC) to initiate formation of the DNA replication initiation complex once per cell cycle. Binds the DnaA box (a 9 base pair repeat at the origin) and separates the double-stranded (ds)DNA. Forms a right-handed helical filament on oriC DNA; dsDNA binds to the exterior of the filament while single-stranded (ss)DNA is stabiized in the filament's interior. The ATP-DnaA-oriC complex binds and stabilizes one strand of the AT-rich DNA unwinding element (DUE), permitting loading of DNA polymerase. After initiation quickly degrades to an ADP-DnaA complex that is not apt for DNA replication. Binds acidic phospholipids. The protein is Chromosomal replication initiator protein DnaA of Bacteroides thetaiotaomicron (strain ATCC 29148 / DSM 2079 / JCM 5827 / CCUG 10774 / NCTC 10582 / VPI-5482 / E50).